A 267-amino-acid polypeptide reads, in one-letter code: Proteasome assembly chaperone 2 (267 aa).

It belongs to the PSMG2 family. Component of the 20S proteasome chaperone. Forms a heterodimer with PBA1 that binds to proteasome precursors.

The protein resides in the cytoplasm. Its function is as follows. Involved in 20S proteasome assembly. Required for maximal proteasome activity. Affects the chymotrypsin-like activity of the proteasome. Can be degraded by the proteasome. Involved in the endoplasmic reticulum-associated degradation (ERAD). This chain is Proteasome assembly chaperone 2 (ADD66), found in Saccharomyces cerevisiae (strain ATCC 204508 / S288c) (Baker's yeast).